Consider the following 466-residue polypeptide: MKQSILSFIQKHQLLKEGAKIIVGVSGGSDSMALLHFLKNLQEQWEIEVIALTINHQLRGEDSTADQKFVEQWCFHSDIRCIAHQVDVGEYQRQYRVSEELAARRLRYEIYEAEMRKQGADYLALGHHGDDQVETLFMRLTRVATSNAFEGIPVKRSFASGQLIRPFLCVNKQLILNYVKENEVPFREDQTNKDNKYTRNYYRNEIIPLLTKNNERLFITAQRLSETLREDENYLAKEANRMVEEVIIWDENFSKISFSNQAFIERPHALQRRAYHLILNYLYDTLPKDLSYIHEEKFFALIERQEGNTYIDFPLSLRVENSYGKIQLYFPNRHPRHSVFHLPLQVPDQVELPDGARITSEWIDATLDKNSRNNIIIPIDSVALPLHIRTRKPGDRMTWDGLKGTKKLKDIWIDAKIPTNERDTWPIVTDDNNTIIWLVGLKKAFGSNQFCQSGEKIKLSYHKGNI.

An ATP-binding site is contributed by S26–S31.

The protein belongs to the tRNA(Ile)-lysidine synthase family.

It localises to the cytoplasm. The enzyme catalyses cytidine(34) in tRNA(Ile2) + L-lysine + ATP = lysidine(34) in tRNA(Ile2) + AMP + diphosphate + H(+). Its function is as follows. Ligates lysine onto the cytidine present at position 34 of the AUA codon-specific tRNA(Ile) that contains the anticodon CAU, in an ATP-dependent manner. Cytidine is converted to lysidine, thus changing the amino acid specificity of the tRNA from methionine to isoleucine. This Oceanobacillus iheyensis (strain DSM 14371 / CIP 107618 / JCM 11309 / KCTC 3954 / HTE831) protein is tRNA(Ile)-lysidine synthase.